A 160-amino-acid chain; its full sequence is uncharacterized protein (160 aa).

Residues 9–151 enclose the N-acetyltransferase domain; sequence LLINYKTLEK…GENPLIWLPE (143 aa).

This is an uncharacterized protein from Oceanobacillus iheyensis (strain DSM 14371 / CIP 107618 / JCM 11309 / KCTC 3954 / HTE831).